The chain runs to 334 residues: Mediator of RNA polymerase II transcription subunit 4 (334 aa).

The stretch at 71-100 (QEREQLIRTLEAHVEKRDEVIQQLETNLKS) forms a coiled coil. The segment at 193–334 (PLITSPSASS…ASKKTGSSNK (142 aa)) is disordered. 2 stretches are compositionally biased toward polar residues: residues 194–206 (LITS…SNGG) and 251–282 (NEKQ…SSPN).

The protein belongs to the Mediator complex subunit 4 family. In terms of assembly, component of the Mediator complex.

The protein resides in the nucleus. In terms of biological role, component of the Mediator complex, a coactivator involved in the regulated transcription of nearly all RNA polymerase II-dependent genes. Mediator functions as a bridge to convey information from gene-specific regulatory proteins to the basal RNA polymerase II transcription machinery. Mediator is recruited to promoters by direct interactions with regulatory proteins and serves as a scaffold for the assembly of a functional preinitiation complex with RNA polymerase II and the general transcription factors. The polypeptide is Mediator of RNA polymerase II transcription subunit 4 (mdt-4) (Caenorhabditis elegans).